The following is a 355-amino-acid chain: tRNA-specific 2-thiouridylase MnmA (355 aa).

Residues 8–15 and methionine 34 contribute to the ATP site; that span reads GMSGGVDS. Catalysis depends on cysteine 103, which acts as the Nucleophile. Cysteine 103 and cysteine 199 are joined by a disulfide. Glycine 127 is a binding site for ATP. The interaction with tRNA stretch occupies residues 149 to 151; it reads KDQ. Cysteine 199 functions as the Cysteine persulfide intermediate in the catalytic mechanism. The interval 305-306 is interaction with tRNA; sequence RY.

Belongs to the MnmA/TRMU family.

The protein localises to the cytoplasm. The catalysed reaction is S-sulfanyl-L-cysteinyl-[protein] + uridine(34) in tRNA + AH2 + ATP = 2-thiouridine(34) in tRNA + L-cysteinyl-[protein] + A + AMP + diphosphate + H(+). Its function is as follows. Catalyzes the 2-thiolation of uridine at the wobble position (U34) of tRNA, leading to the formation of s(2)U34. In Clostridium acetobutylicum (strain ATCC 824 / DSM 792 / JCM 1419 / IAM 19013 / LMG 5710 / NBRC 13948 / NRRL B-527 / VKM B-1787 / 2291 / W), this protein is tRNA-specific 2-thiouridylase MnmA.